The sequence spans 390 residues: Altered inheritance of mitochondria protein 6 (390 aa).

A signal peptide spans 1 to 26; that stretch reads MLGLKGCLTILIGYVIAVCALFSSRG.

This sequence belongs to the AIM6 family.

The chain is Altered inheritance of mitochondria protein 6 (AIM6) from Saccharomyces cerevisiae (strain YJM789) (Baker's yeast).